The primary structure comprises 331 residues: Gamma-parvin (331 aa).

Met1 bears the N-acetylmethionine mark. The tract at residues 18–38 (QPTEEELPRGGKKKYLSPNSK) is disordered. Calponin-homology (CH) domains follow at residues 44-151 (EELQ…KRFQ) and 210-317 (HAVQ…QKHS).

It belongs to the parvin family. Interacts with ILK; the interaction promotes the establishment of cell polarity required for leukocyte migration. Interacts with ARHGEF6; the guanine nucleotide exchange factor activity of ARHGEF6 is essential for the PARVG-induced enhancement of cell spreading. As to expression, expressed strongly in spleen and testis, moderately in lung and weakly in brain and heart.

Its subcellular location is the cell junction. The protein localises to the focal adhesion. It is found in the cell membrane. The protein resides in the cytoplasm. It localises to the cytoskeleton. Plays a role with ILK in promoting the cell adhesion and spreading of leukocytes. In Mus musculus (Mouse), this protein is Gamma-parvin (Parvg).